Here is a 22-residue protein sequence, read N- to C-terminus: Proline-rich peptide (22 aa).

Positions 1 to 22 are disordered; that stretch reads FVDRNRIPRSNNGPKIPIISNP.

The protein resides in the secreted. Its function is as follows. Antibacterial peptide active against Gram-positive bacterium M.luteus and Gram-negative bacterium E.coli. This Calliphora vicina (Blue blowfly) protein is Proline-rich peptide.